The following is a 280-amino-acid chain: Transcription factor HES-1 (280 aa).

A disordered region spans residues 1-44 (MPADIMEKNSSSPVAATPASVNTTPDKPKTASEHRKSSKPIMEK). A compositionally biased stretch (low complexity) spans 10-21 (SSSPVAATPASV). Residues 26–35 (DKPKTASEHR) show a composition bias toward basic and acidic residues. The 58-residue stretch at 34 to 91 (HRKSSKPIMEKRRRARINESLSQLKTLILDALKKDSSRHSKLEKADILEMTVKHLRNL) folds into the bHLH domain. The Orange domain maps to 110 to 143 (YRAGFSECMNEVTRFLSTCEGVNTEVRTRLLGHL). 2 disordered regions span residues 157–200 (GQPH…PPGG) and 254–280 (TSVG…PWRN). Pro residues-rich tracts occupy residues 164–174 (QAPPPPPPGPG) and 181–200 (FAPP…PPGG). Residues 254–271 (TSVGPNAVSPSSGPSLTA) are compositionally biased toward polar residues. Residues 275-278 (WRPW) carry the WRPW motif motif.

In terms of assembly, transcription repression requires formation of a complex with a corepressor protein of the Groucho/TLE family. Interacts (via WPRW motif) with TLE1, and more weakly with TLE2. Interacts with HES6. Interacts with SIRT1. Interacts with an FA complex, composed of FANCA, FANCF, FANCG and FANCL, but not of FANCC, nor FANCE. (Microbial infection) Ubiquitinated via human cytomegalovirus/HCMV protein IE1 that assembles a HES1 ubiquitination complex; leading to HES1 proteasomal degradation.

The protein resides in the nucleus. Transcriptional repressor of genes that require a bHLH protein for their transcription. May act as a negative regulator of myogenesis by inhibiting the functions of MYOD1 and ASH1. Binds DNA on N-box motifs: 5'-CACNAG-3' with high affinity and on E-box motifs: 5'-CANNTG-3' with low affinity. May play a role in a functional FA core complex response to DNA cross-link damage, being required for the stability and nuclear localization of FA core complex proteins, as well as for FANCD2 monoubiquitination in response to DNA damage. In Homo sapiens (Human), this protein is Transcription factor HES-1 (HES1).